Reading from the N-terminus, the 113-residue chain is Large ribosomal subunit protein uL22 (113 aa).

Belongs to the universal ribosomal protein uL22 family. In terms of assembly, part of the 50S ribosomal subunit.

This protein binds specifically to 23S rRNA; its binding is stimulated by other ribosomal proteins, e.g. L4, L17, and L20. It is important during the early stages of 50S assembly. It makes multiple contacts with different domains of the 23S rRNA in the assembled 50S subunit and ribosome. In terms of biological role, the globular domain of the protein is located near the polypeptide exit tunnel on the outside of the subunit, while an extended beta-hairpin is found that lines the wall of the exit tunnel in the center of the 70S ribosome. This Syntrophomonas wolfei subsp. wolfei (strain DSM 2245B / Goettingen) protein is Large ribosomal subunit protein uL22.